We begin with the raw amino-acid sequence, 108 residues long: Signal recognition particle 19 kDa protein (108 aa).

It belongs to the SRP19 family. In terms of assembly, part of the signal recognition particle protein translocation system, which is composed of SRP and FtsY. Archaeal SRP consists of a 7S RNA molecule of 300 nucleotides and two protein subunits: SRP54 and SRP19.

Its subcellular location is the cytoplasm. In terms of biological role, involved in targeting and insertion of nascent membrane proteins into the cytoplasmic membrane. Binds directly to 7S RNA and mediates binding of the 54 kDa subunit of the SRP. The sequence is that of Signal recognition particle 19 kDa protein from Thermococcus kodakarensis (strain ATCC BAA-918 / JCM 12380 / KOD1) (Pyrococcus kodakaraensis (strain KOD1)).